Reading from the N-terminus, the 787-residue chain is Integrin beta-6 (787 aa).

Positions 1 to 21 are cleaved as a signal peptide; that stretch reads MGIELVCLFLLLLGRNDHVQG. The PSI domain maps to 22–71; it reads GCAWGGAESCSDCLLTGPHCAWCSQENFTHLSGAGERCDTPANLLAKGCQ. The Extracellular portion of the chain corresponds to 22 to 708; it reads GCAWGGAESC…KDCPKPPNIP (687 aa). Intrachain disulfides connect C23-C41, C31-C454, C34-C59, C44-C70, C197-C204, C252-C293, C394-C406, C426-C452, C456-C476, C467-C479, C481-C490, C492-C519, C502-C517, C511-C522, C524-C537, C539-C560, C544-C558, C552-C563, and C565-C574. N-linked (GlcNAc...) asparagine glycans are attached at residues N48 and N97. The VWFA domain occupies 131–371; it reads YPVDLYYLMD…QLIISAYEEL (241 aa). Positions 140, 142, and 144 each coordinate Mg(2+). S144, D147, D148, and E179 together coordinate Ca(2+). Ca(2+) contacts are provided by N235, D237, P239, and E240. E240 contacts Mg(2+). The N-linked (GlcNAc...) asparagine glycan is linked to N260. Ca(2+) contacts are provided by D271 and K355. A glycan (N-linked (GlcNAc...) asparagine) is linked at N387. N418 is a glycosylation site (N-linked (GlcNAc...) asparagine). 4 I-EGF domains span residues 456–491, 492–538, 539–575, and 576–615; these read CQREIETNSSKCHNGNGSFQCGVCTCNPGHMGPHCE, CGED…PYCQ, CDNFSCLRHKGLLCGDNGDCDCGECVCRDGWTGEYCN, and CTTNRDSCTSEDGVLCSGRGDCVCGKCVCRNPGASGPTCE. 2 N-linked (GlcNAc...) asparagine glycosylation sites follow: N463 and N471. The N-linked (GlcNAc...) asparagine glycan is linked to N541. A glycan (N-linked (GlcNAc...) asparagine) is linked at N575. 9 cysteine pairs are disulfide-bonded: C576-C599, C583-C597, C591-C602, C604-C614, C617-C620, C624-C669, C630-C649, C633-C645, and C677-C701. Residues 709–729 traverse the membrane as a helical segment; it reads MIMLGVSLAILLIGVVLLCIW. The tract at residues 730–757 is interaction with HAX1; sequence KLLVSFHDRKEVAKFEAERSKAKWQTGT. The Cytoplasmic segment spans residues 730–787; it reads KLLVSFHDRKEVAKFEAERSKAKWQTGTNPLYRGSTSTFKNVTYKHREKHKAGLSSDG.

It belongs to the integrin beta chain family. As to quaternary structure, heterodimer of an alpha and a beta subunit. Interacts with FLNB. Interacts with HAX1. ITGAV:ITGB6 interacts with FBN1. ITGAV:ITGB6 interacts with TGFB1.

It is found in the cell membrane. Its subcellular location is the cell junction. It localises to the focal adhesion. Functionally, integrin alpha-V:beta-6 (ITGAV:ITGB6) is a receptor for fibronectin and cytotactin. It recognizes the sequence R-G-D in its ligands. ITGAV:ITGB6 acts as a receptor for fibrillin-1 (FBN1) and mediates R-G-D-dependent cell adhesion to FBN1. Integrin alpha-V:beta-6 (ITGAV:ITGB6) mediates R-G-D-dependent release of transforming growth factor beta-1 (TGF-beta-1) from regulatory Latency-associated peptide (LAP), thereby playing a key role in TGF-beta-1 activation. This is Integrin beta-6 (Itgb6) from Mus musculus (Mouse).